A 332-amino-acid polypeptide reads, in one-letter code: RNA polymerase II holoenzyme cyclin-like subunit (332 aa).

The 102-residue stretch at 74-175 folds into the Cyclin N-terminal domain; that stretch reads RIYCYFLIMK…LIEELQSYMI (102 aa).

This sequence belongs to the cyclin family. Cyclin C subfamily. As to quaternary structure, component of the SRB8-11 complex, a regulatory module of the Mediator complex.

The protein resides in the nucleus. In terms of biological role, component of the SRB8-11 complex. The SRB8-11 complex is a regulatory module of the Mediator complex which is itself involved in regulation of basal and activated RNA polymerase II-dependent transcription. The SRB8-11 complex may be involved in the transcriptional repression of a subset of genes regulated by Mediator. It may inhibit the association of the Mediator complex with RNA polymerase II to form the holoenzyme complex. The SRB8-11 complex phosphorylates the C-terminal domain (CTD) of the largest subunit of RNA polymerase II. This is RNA polymerase II holoenzyme cyclin-like subunit (SSN8) from Eremothecium gossypii (strain ATCC 10895 / CBS 109.51 / FGSC 9923 / NRRL Y-1056) (Yeast).